The chain runs to 347 residues: MRPIVLMGHERPLTQVKYNREGDLLFTCSKDISASVWYSNNGERLGTLDGHMGSIWSIDSDHTSLYCVTGSADYTIKVWTLMNGQCVQTWNCPVPVKRVEFSPCGKYILAILDNVMKKPGSIEIYEVKRNPETNEITEFVEEPIHSIVTHEGLDAASVAGWSGEGKYIIAGHKDGKISKYDTQDGYKLVESQQVHKDSVSDLQFSPDRTYFITCSRDSNAHIIDIETFKVLKTYETDSPLNSAAITPLKEFVILGGGQDASEVTTTSASEGKFEARIYHKVFEEEIGRVVGHFGPLNSIAVSPQGTSYTSGGEEGLVRLHHFEKSYFDFKYDVEKAADAKEHISHEA.

WD repeat units lie at residues 8-49, 51-89, 149-190, 194-233, and 291-330; these read GHER…GTLD, HMGS…CVQT, THEG…KLVE, VHKD…VLKT, and GHFG…FDFK.

The protein belongs to the eIF-3 subunit I family. In terms of assembly, component of the eukaryotic translation initiation factor 3 (eIF-3) complex.

The protein resides in the cytoplasm. Its function is as follows. Component of the eukaryotic translation initiation factor 3 (eIF-3) complex, which is involved in protein synthesis of a specialized repertoire of mRNAs and, together with other initiation factors, stimulates binding of mRNA and methionyl-tRNAi to the 40S ribosome. The eIF-3 complex specifically targets and initiates translation of a subset of mRNAs involved in cell proliferation. This Candida glabrata (strain ATCC 2001 / BCRC 20586 / JCM 3761 / NBRC 0622 / NRRL Y-65 / CBS 138) (Yeast) protein is Eukaryotic translation initiation factor 3 subunit I.